The sequence spans 1088 residues: Ran-binding protein 17 (1088 aa).

Residue A2 is modified to N-acetylalanine. S569 is subject to Phosphoserine.

The protein belongs to the exportin family. Binds to nucleoporins and the GTP-bound form of Ran. Highly expressed in primary spermatocytes and very weakly in pancreas.

Its subcellular location is the cytoplasm. The protein localises to the nucleus. It localises to the nuclear pore complex. In terms of biological role, may function as a nuclear transport receptor. In Mus musculus (Mouse), this protein is Ran-binding protein 17 (Ranbp17).